The primary structure comprises 563 residues: (R)-mandelonitrile lyase 1 (563 aa).

A signal peptide spans 1–27 (MEKSTMSAILLVLHLFVLLLQYSEVHS). FAD is bound by residues 63 to 64 (TS), 82 to 83 (ER), Val129, Thr133, and 137 to 140 (NAGV). N-linked (GlcNAc...) asparagine glycans are attached at residues Asn145 and Asn162. Position 244 (Val244) interacts with FAD. Cys355 lines the substrate pocket. Asn379 carries an N-linked (GlcNAc...) asparagine glycan. Cys426 and Cys477 are oxidised to a cystine. Tyr484 is a binding site for substrate. Residues 485–486 (WH) and Gly514 contribute to the FAD site. The active-site Proton donor is the His486. His524 acts as the Proton acceptor in catalysis. Residue 525–526 (PQ) participates in FAD binding.

This sequence belongs to the GMC oxidoreductase family. Monomer. Requires FAD as cofactor. Post-translationally, glycosylated. Seeds. Localized within cotyledonary parenchyma cells.

It is found in the vacuole. The protein resides in the aleurone grain. It catalyses the reaction (R)-mandelonitrile = benzaldehyde + hydrogen cyanide. Involved in cyanogenesis, the release of HCN from injured tissues. Catalyzes the stereospecific addition of HCN to a variety of aldehydes in vitro. It is a major seed constituent, and could have the additional role of a storage form for reduced nitrogen. The protein is (R)-mandelonitrile lyase 1 (MDL1) of Prunus serotina (Black cherry).